We begin with the raw amino-acid sequence, 203 residues long: Probable nicotinate-nucleotide adenylyltransferase (203 aa).

This sequence belongs to the NadD family.

It catalyses the reaction nicotinate beta-D-ribonucleotide + ATP + H(+) = deamido-NAD(+) + diphosphate. The protein operates within cofactor biosynthesis; NAD(+) biosynthesis; deamido-NAD(+) from nicotinate D-ribonucleotide: step 1/1. Catalyzes the reversible adenylation of nicotinate mononucleotide (NaMN) to nicotinic acid adenine dinucleotide (NaAD). This is Probable nicotinate-nucleotide adenylyltransferase from Prosthecochloris aestuarii (strain DSM 271 / SK 413).